Consider the following 528-residue polypeptide: Phosphoenolpyruvate carboxykinase (ATP) (528 aa).

3 residues coordinate substrate: arginine 56, tyrosine 192, and lysine 198. ATP is bound by residues lysine 198, histidine 217, and 233 to 241; that span reads GLSGTGKTT. 2 residues coordinate Mn(2+): lysine 198 and histidine 217. Aspartate 254 is a binding site for Mn(2+). ATP is bound by residues glutamate 282, arginine 319, and threonine 444. Position 319 (arginine 319) interacts with substrate.

The protein belongs to the phosphoenolpyruvate carboxykinase (ATP) family. Mn(2+) is required as a cofactor.

It localises to the cytoplasm. It catalyses the reaction oxaloacetate + ATP = phosphoenolpyruvate + ADP + CO2. It functions in the pathway carbohydrate biosynthesis; gluconeogenesis. Functionally, involved in the gluconeogenesis. Catalyzes the conversion of oxaloacetate (OAA) to phosphoenolpyruvate (PEP) through direct phosphoryl transfer between the nucleoside triphosphate and OAA. This Bacillus mycoides (strain KBAB4) (Bacillus weihenstephanensis) protein is Phosphoenolpyruvate carboxykinase (ATP).